The chain runs to 279 residues: Undecaprenyl-diphosphatase (279 aa).

8 consecutive transmembrane segments (helical) span residues 2–22 (LFIE…TEWL), 44–64 (AFME…VIVI), 85–105 (WQLW…AVPL), 113–133 (FNHM…FLWI), 163–183 (VLSI…AIIL), 188–208 (TVAA…YSGL), 225–245 (LLVL…VIKL), and 255–275 (FTVF…YSVF).

Belongs to the UppP family.

The protein resides in the cell membrane. The enzyme catalyses di-trans,octa-cis-undecaprenyl diphosphate + H2O = di-trans,octa-cis-undecaprenyl phosphate + phosphate + H(+). Catalyzes the dephosphorylation of undecaprenyl diphosphate (UPP). Confers resistance to bacitracin. The sequence is that of Undecaprenyl-diphosphatase from Streptococcus equi subsp. zooepidemicus (strain MGCS10565).